Here is an 812-residue protein sequence, read N- to C-terminus: Valine--tRNA ligase (812 aa).

Positions Pro46 to His56 match the 'HIGH' region motif. The 'KMSKS' region signature appears at Lys536–Ser540. Lys539 is an ATP binding site.

The protein belongs to the class-I aminoacyl-tRNA synthetase family. ValS type 2 subfamily. As to quaternary structure, monomer.

Its subcellular location is the cytoplasm. The catalysed reaction is tRNA(Val) + L-valine + ATP = L-valyl-tRNA(Val) + AMP + diphosphate. Functionally, catalyzes the attachment of valine to tRNA(Val). As ValRS can inadvertently accommodate and process structurally similar amino acids such as threonine, to avoid such errors, it has a 'posttransfer' editing activity that hydrolyzes mischarged Thr-tRNA(Val) in a tRNA-dependent manner. In Rickettsia conorii (strain ATCC VR-613 / Malish 7), this protein is Valine--tRNA ligase.